Here is a 153-residue protein sequence, read N- to C-terminus: Lectin-like protein EP153R (153 aa).

At 1-30 the chain is on the cytoplasmic side; that stretch reads MYFKKKYIGLIDKNCEKKILDDSSTIKICY. A helical transmembrane segment spans residues 31–51; it reads ILIGILIGTNMITLIYNFIFW. Residues 52–153 lie on the Extracellular side of the membrane; sequence DNYIKCYRNN…YTDLLFICGK (102 aa). A disulfide bond links C67 and C78. N-linked (GlcNAc...) asparagine; by host glycosylation is found at N83, N89, N101, N107, N113, N120, N127, and N143. Residues C97 and C151 are joined by a disulfide bond.

The protein belongs to the asfivirus lectin-like protein family. As to quaternary structure, homodimer.

It is found in the host endoplasmic reticulum membrane. Its function is as follows. Down-regulates MHC-I expression by impairing the appropriate configuration or presentation into the plasma membrane of the latter. Participates in viral hemadsorption, which may help viral spread. Reduces the transactivating activity of host TP53, thus inhibiting apoptosis. Non-essential for virus growth in swine macrophage cell cultures. The protein is Lectin-like protein EP153R of African swine fever virus (strain Badajoz 1971 Vero-adapted) (Ba71V).